We begin with the raw amino-acid sequence, 1378 residues long: DNA-directed RNA polymerase subunit beta (1378 aa).

Belongs to the RNA polymerase beta chain family. In terms of assembly, the RNAP catalytic core consists of 2 alpha, 1 beta, 1 beta' and 1 omega subunit. When a sigma factor is associated with the core the holoenzyme is formed, which can initiate transcription.

The enzyme catalyses RNA(n) + a ribonucleoside 5'-triphosphate = RNA(n+1) + diphosphate. DNA-dependent RNA polymerase catalyzes the transcription of DNA into RNA using the four ribonucleoside triphosphates as substrates. The protein is DNA-directed RNA polymerase subunit beta of Dinoroseobacter shibae (strain DSM 16493 / NCIMB 14021 / DFL 12).